A 493-amino-acid polypeptide reads, in one-letter code: Proline--tRNA ligase (493 aa).

Belongs to the class-II aminoacyl-tRNA synthetase family. ProS type 3 subfamily. As to quaternary structure, homodimer.

Its subcellular location is the cytoplasm. The enzyme catalyses tRNA(Pro) + L-proline + ATP = L-prolyl-tRNA(Pro) + AMP + diphosphate. In terms of biological role, catalyzes the attachment of proline to tRNA(Pro) in a two-step reaction: proline is first activated by ATP to form Pro-AMP and then transferred to the acceptor end of tRNA(Pro). This Porphyromonas gingivalis (strain ATCC 33277 / DSM 20709 / CIP 103683 / JCM 12257 / NCTC 11834 / 2561) protein is Proline--tRNA ligase.